Consider the following 547-residue polypeptide: Vacuolar fusion protein MON1 homolog B (547 aa).

Met-1 carries the N-acetylmethionine modification. The segment covering 1 to 15 (MEVGGDTAAPAPGGA) has biased composition (low complexity). The tract at residues 1-106 (MEVGGDTAAP…GGDPSDEEWR (106 aa)) is disordered. Residues Ser-59 and Ser-61 each carry the phosphoserine modification.

It belongs to the MON1/SAND family. Interacts with CCNT2; down-regulates CCNT2-mediated activation of viral promoters during herpes simplex virus 1/HHV-1 infection. Found in a complex with RMC1, CCZ1 MON1A and MON1B.

The sequence is that of Vacuolar fusion protein MON1 homolog B (MON1B) from Homo sapiens (Human).